The sequence spans 489 residues: Cytochrome P450 monooxygenase trt6 (489 aa).

The helical transmembrane segment at 10–30 (SLWSFGLWILVILSPVLFFAS) threads the bilayer. 2 N-linked (GlcNAc...) asparagine glycosylation sites follow: Asn364 and Asn407. Cys430 contacts heme.

It belongs to the cytochrome P450 family. Requires heme as cofactor.

The protein resides in the membrane. Its pathway is secondary metabolite biosynthesis; terpenoid biosynthesis. Cytochrome P450 monooxygenase; part of the gene cluster that mediates the biosynthesis of terretonin, a fungal meroterpenoid that acts as a mycotoxin. The first step of the pathway is the synthesis of 3,5-dimethylorsellinic acid (DMOA) by the polyketide synthase trt4. DMOA is then prenylated into farnesyl-DMOA by the polyprenyl transferase trt2. Methylation by the methyltransferase trt5 then leads to farnesyl-DMOA methyl ester which is further subject to epoxidation by the FAD-dependent monooxygenase trt8 to yield epoxyfarnesyl-DMOA methyl ester. Cyclization of epoxyfarnesyl-DMOA methyl ester by the terpene cyclase trt1 leads to a tetracycle intermediate which is in turn converted to preterretonin. Dehydrogenase trt9 comes next to transform preterretonin to preterrenoid. The FAD-dependent monooxygenase trt3 is then required for the C-hydroxylation at C16 of preterrenoid to yield terrenoid. The cytochrome P450 trt6 catalyzes three successive oxidations to transform terrenoid into an unstable intermediate, which then undergoes the D-ring expansion and unusual rearrangement of the methoxy group to afford the core skeleton of terretonin. Trt14 catalyzes the D-ring expansion of terretonin involving intramolecular methoxy rearrangement as well as the hydrolysis of the expanded D-ring and the methyl ester moiety. Finally, the nonheme iron-dependent dioxygenase trt7 accomplishes the last two oxidation reactions steps to complete the biosynthesis of terretonin. Terretonin C is produced via spontaneous decarboxylation of the terretonin precursor. Another shunt product of the terretonin biosynthesis is dihydrofarnesyl-DMOA, derived from epoxyfarnesyl-DMOA through hydrolysis of the epoxide. This is Cytochrome P450 monooxygenase trt6 from Aspergillus terreus (strain NIH 2624 / FGSC A1156).